The primary structure comprises 160 residues: Large ribosomal subunit protein uL13 (160 aa).

The protein belongs to the universal ribosomal protein uL13 family. Part of the 50S ribosomal subunit.

Its function is as follows. This protein is one of the early assembly proteins of the 50S ribosomal subunit, although it is not seen to bind rRNA by itself. It is important during the early stages of 50S assembly. In Orientia tsutsugamushi (strain Boryong) (Rickettsia tsutsugamushi), this protein is Large ribosomal subunit protein uL13.